The primary structure comprises 269 residues: Protein RKD1 (269 aa).

The 90-residue stretch at 106–195 (TTTTKKRRCR…EKMEGEENED (90 aa)) folds into the RWP-RK domain. Residues 175 to 216 (LQKLISNVKELEKMEGEENEDKLRNALEKLEKEKKTIEKLPD) are a coiled coil. The disordered stretch occupies residues 230–269 (CFKANHKRKRRSGMSTPITSSSSSASASSSSYSSVSGFER). Positions 249–269 (SSSSSASASSSSYSSVSGFER) are enriched in low complexity.

Its subcellular location is the nucleus. Its function is as follows. Putative transcription factor. The chain is Protein RKD1 (RKD1) from Arabidopsis thaliana (Mouse-ear cress).